A 399-amino-acid polypeptide reads, in one-letter code: Guanine nucleotide-binding protein negative regulator 1 (399 aa).

WD repeat units lie at residues 44–83, 105–145, 150–194, 207–247, 252–292, and 296–337; these read KPLNFFHSSRWSPDGSTILSLTEDQCLNCWNVPFSDLSKK, YSYS…NKAS, DHQE…VMTT, SLKG…PCQL, ERGN…DMVY, and GHRG…EETH.

Interacts with gpa1.

Its subcellular location is the cytoplasm. Its function is as follows. Negatively regulates the pheromone-response pathway. Acts as a structural mimic of the G protein beta subunit thereby interacting with gpa1 which then inhibits gpa1 signaling. The polypeptide is Guanine nucleotide-binding protein negative regulator 1 (gnr1) (Schizosaccharomyces pombe (strain 972 / ATCC 24843) (Fission yeast)).